Here is a 96-residue protein sequence, read N- to C-terminus: MESPVKEHREGTLIRVRVNPDADTTDLKGVDEWRGVLEVDVAAPPVKGKANRELLEFLGRKLNTTCELVSGEKSREKLVLARDVSVDEVKERLGLR.

Belongs to the UPF0235 family.

This Methanopyrus kandleri (strain AV19 / DSM 6324 / JCM 9639 / NBRC 100938) protein is UPF0235 protein MK0273.